The chain runs to 750 residues: Photosystem I P700 chlorophyll a apoprotein A1 (750 aa).

8 helical membrane passes run 70-93 (VFSAHFGQLSIIFLWLSGMYFHGA), 156-179 (LYCTAIGALVFAALMLFAGWFHYH), 195-219 (LNHHLAGLLGLGSLSWAGHQVHVSL), 291-309 (IAHHHLAIAILFLIAGHMY), 346-369 (WHAQLSLNLAMLGSLTIVVAHHMY), 385-411 (LSLFTHHMWIGGFLIVGAAAHAAIFMV), 433-455 (AIISHLNWACIFLGFHSFGLYIH), and 531-549 (FLVHHIHAFTIHVTVLILL). C573 and C582 together coordinate [4Fe-4S] cluster. The next 2 membrane-spanning stretches (helical) occupy residues 589-610 (HVFLGLFWMYNSISVVIFHFSW) and 664-686 (LSAYGLFFLGAHFVWAFSLMFLF). A chlorophyll a'-binding site is contributed by H675. The chlorophyll a site is built by M683 and Y691. W692 lines the phylloquinone pocket. Residues 724–744 (AVGVTHYLLGGIATTWAFFLA) traverse the membrane as a helical segment.

Belongs to the PsaA/PsaB family. In terms of assembly, the PsaA/B heterodimer binds the P700 chlorophyll special pair and subsequent electron acceptors. PSI consists of a core antenna complex that captures photons, and an electron transfer chain that converts photonic excitation into a charge separation. The eukaryotic PSI reaction center is composed of at least 11 subunits. P700 is a chlorophyll a/chlorophyll a' dimer, A0 is one or more chlorophyll a, A1 is one or both phylloquinones and FX is a shared 4Fe-4S iron-sulfur center. serves as cofactor.

The protein resides in the plastid. It localises to the chloroplast thylakoid membrane. The catalysed reaction is reduced [plastocyanin] + hnu + oxidized [2Fe-2S]-[ferredoxin] = oxidized [plastocyanin] + reduced [2Fe-2S]-[ferredoxin]. PsaA and PsaB bind P700, the primary electron donor of photosystem I (PSI), as well as the electron acceptors A0, A1 and FX. PSI is a plastocyanin-ferredoxin oxidoreductase, converting photonic excitation into a charge separation, which transfers an electron from the donor P700 chlorophyll pair to the spectroscopically characterized acceptors A0, A1, FX, FA and FB in turn. Oxidized P700 is reduced on the lumenal side of the thylakoid membrane by plastocyanin. The sequence is that of Photosystem I P700 chlorophyll a apoprotein A1 from Jasminum nudiflorum (Winter jasmine).